The following is a 434-amino-acid chain: MTDFSPREIVSELDRFIVGQHDAKRAVSIALRNRWRRLQLEGSLREEVLPKNILMIGPTGVGKTEIARRLAKLAGAPFIKVEATKFTEVGYVGRDVEQIIRDLVEVAISQVREKKRKDVEARAQIAAEERVLDALVGANSSATTRDSFRKKLRAGELNDKEIEVETQSTGGGSPMFEIPGMPGAQMGAISLGDIFGKMGGRTKTRRLTVEDSHELLVNEEADKLLDSDQLVQEAINAVENNGIVFLDEIDKICVRDGRSGGEVSREGVQRDLLPLIEGTTVSTKHGAVKTDHILFIASGAFHIAKPSDLLPELQGRLPIRVELSALTRDDMRRILTEPEASLIKQYVALLQTEGVTLEITDEAIDALADVAVAVNSSVENIGARRLQTVMERVLDEISFTAPDRDGETIQVDAAYVQKHVGDLAKNADLSRFIL.

Residues V18, 60 to 65 (GVGKTE), D247, E312, and R384 each bind ATP.

It belongs to the ClpX chaperone family. HslU subfamily. In terms of assembly, a double ring-shaped homohexamer of HslV is capped on each side by a ring-shaped HslU homohexamer. The assembly of the HslU/HslV complex is dependent on binding of ATP.

Its subcellular location is the cytoplasm. Its function is as follows. ATPase subunit of a proteasome-like degradation complex; this subunit has chaperone activity. The binding of ATP and its subsequent hydrolysis by HslU are essential for unfolding of protein substrates subsequently hydrolyzed by HslV. HslU recognizes the N-terminal part of its protein substrates and unfolds these before they are guided to HslV for hydrolysis. The polypeptide is ATP-dependent protease ATPase subunit HslU (Rhodopseudomonas palustris (strain BisB18)).